The following is a 199-amino-acid chain: V-type proton ATPase subunit E (199 aa).

The protein belongs to the V-ATPase E subunit family.

Produces ATP from ADP in the presence of a proton gradient across the membrane. This is V-type proton ATPase subunit E from Clostridium botulinum (strain 657 / Type Ba4).